The following is a 299-amino-acid chain: uncharacterized protein (299 aa).

Residues methionine 1–leucine 10 are compositionally biased toward polar residues. Disordered regions lie at residues methionine 1 to asparagine 30, lysine 54 to asparagine 89, and glutamine 148 to valine 212. Residues asparagine 56 to asparagine 89 are compositionally biased toward low complexity. Composition is skewed to acidic residues over residues tyrosine 150 to glutamate 169 and glutamate 177 to valine 212.

This is an uncharacterized protein from Dictyostelium discoideum (Social amoeba).